The chain runs to 343 residues: Serine/threonine-protein kinase SRK2C (343 aa).

A Protein kinase domain is found at tyrosine 4–phenylalanine 260. ATP contacts are provided by residues isoleucine 10 to alanine 18 and lysine 33. Aspartate 123 serves as the catalytic Proton acceptor. The residue at position 158 (threonine 158) is a Phosphothreonine.

It belongs to the protein kinase superfamily. Ser/Thr protein kinase family. As to quaternary structure, interacts with I-2 and TOPP1. In terms of tissue distribution, expressed in seedlings.

The enzyme catalyses L-seryl-[protein] + ATP = O-phospho-L-seryl-[protein] + ADP + H(+). The catalysed reaction is L-threonyl-[protein] + ATP = O-phospho-L-threonyl-[protein] + ADP + H(+). Functionally, involved in gene regulation and confers tolerance to drought and osmotic stress. The sequence is that of Serine/threonine-protein kinase SRK2C (SRK2C) from Arabidopsis thaliana (Mouse-ear cress).